A 376-amino-acid polypeptide reads, in one-letter code: Succinyl-diaminopimelate desuccinylase (376 aa).

Histidine 66 serves as a coordination point for Zn(2+). Aspartate 68 is an active-site residue. Aspartate 99 provides a ligand contact to Zn(2+). Glutamate 133 serves as the catalytic Proton acceptor. The Zn(2+) site is built by glutamate 134, glutamate 162, and histidine 348.

This sequence belongs to the peptidase M20A family. DapE subfamily. Homodimer. Zn(2+) serves as cofactor. The cofactor is Co(2+).

The catalysed reaction is N-succinyl-(2S,6S)-2,6-diaminopimelate + H2O = (2S,6S)-2,6-diaminopimelate + succinate. It participates in amino-acid biosynthesis; L-lysine biosynthesis via DAP pathway; LL-2,6-diaminopimelate from (S)-tetrahydrodipicolinate (succinylase route): step 3/3. Its function is as follows. Catalyzes the hydrolysis of N-succinyl-L,L-diaminopimelic acid (SDAP), forming succinate and LL-2,6-diaminopimelate (DAP), an intermediate involved in the bacterial biosynthesis of lysine and meso-diaminopimelic acid, an essential component of bacterial cell walls. The polypeptide is Succinyl-diaminopimelate desuccinylase (Nitrosococcus oceani (strain ATCC 19707 / BCRC 17464 / JCM 30415 / NCIMB 11848 / C-107)).